A 113-amino-acid chain; its full sequence is uncharacterized protein (113 aa).

Disordered stretches follow at residues 1–22 (MGEHAIKRHMRQRKPTKHPLAQ) and 90–113 (DGRHTTESSFEHSSPSRSPQSDDL). Positions 90-99 (DGRHTTESSF) are enriched in basic and acidic residues. The span at 100–113 (EHSSPSRSPQSDDL) shows a compositional bias: low complexity.

This is an uncharacterized protein from Mycobacterium tuberculosis (strain ATCC 25618 / H37Rv).